We begin with the raw amino-acid sequence, 280 residues long: MRLVQTINEMKRLSKEAINKGKTIGFVPTMGYLHEGHLSLVKKAREDNDIVVVSIFVNPTQFGPNEDFNRYPRDLERDLRLLEPLNVDYVFYPSVEEMYPKNYSVYVDEVELSKYLCGAKRPGHFRGVCTVVTKLFNIVKPTRAYFGQKDAQQFRILRRMVQNLNMDVEMIEMPIVRESDGLAMSSRNVYLNEEERKEATRLHKSLLKAKELIESGERDVSKIKNSMLEILNHPLLKIDYVEIVDEETLKPIEKIEGKVIIALAVFVGKARLIDNMIINC.

An ATP-binding site is contributed by 30–37 (MGYLHEGH). The Proton donor role is filled by H37. Q61 provides a ligand contact to (R)-pantoate. Residue Q61 coordinates beta-alanine. Position 147–150 (147–150 (GQKD)) interacts with ATP. (R)-pantoate is bound at residue Q153. ATP is bound by residues V176 and 184–187 (MSSR).

This sequence belongs to the pantothenate synthetase family. Homodimer.

The protein resides in the cytoplasm. The catalysed reaction is (R)-pantoate + beta-alanine + ATP = (R)-pantothenate + AMP + diphosphate + H(+). It participates in cofactor biosynthesis; (R)-pantothenate biosynthesis; (R)-pantothenate from (R)-pantoate and beta-alanine: step 1/1. Its function is as follows. Catalyzes the condensation of pantoate with beta-alanine in an ATP-dependent reaction via a pantoyl-adenylate intermediate. In Fervidobacterium nodosum (strain ATCC 35602 / DSM 5306 / Rt17-B1), this protein is Pantothenate synthetase.